Here is a 313-residue protein sequence, read N- to C-terminus: Protein FixB (313 aa).

FAD is bound at residue 255 to 283; it reads LYLAVGISGQIQHMVGANASQTIFAINKD.

It belongs to the ETF alpha-subunit/FixB family. As to quaternary structure, heterodimer of FixA and FixB.

The protein operates within amine and polyamine metabolism; carnitine metabolism. Functionally, required for anaerobic carnitine reduction. May bring reductant to CaiA. This is Protein FixB from Escherichia coli O6:K15:H31 (strain 536 / UPEC).